The following is a 49-amino-acid chain: uncharacterized protein (49 aa).

It belongs to the ELIP/psbS family.

It is found in the plastid. Its subcellular location is the cyanelle. Functionally, possible role in chlorophyll and/or carotenoid binding. This is an uncharacterized protein from Cyanophora paradoxa.